A 339-amino-acid chain; its full sequence is Anthranilate phosphoribosyltransferase (339 aa).

5-phospho-alpha-D-ribose 1-diphosphate contacts are provided by residues Gly82, 85–86 (GD), 92–95 (NIST), 110–118 (KHGNRGISS), and Ser122. Gly82 lines the anthranilate pocket. Ser94 contacts Mg(2+). Asn113 provides a ligand contact to anthranilate. Position 168 (Arg168) interacts with anthranilate. Mg(2+) contacts are provided by Asp227 and Glu228.

Belongs to the anthranilate phosphoribosyltransferase family. In terms of assembly, homodimer. Mg(2+) serves as cofactor.

The enzyme catalyses N-(5-phospho-beta-D-ribosyl)anthranilate + diphosphate = 5-phospho-alpha-D-ribose 1-diphosphate + anthranilate. It participates in amino-acid biosynthesis; L-tryptophan biosynthesis; L-tryptophan from chorismate: step 2/5. In terms of biological role, catalyzes the transfer of the phosphoribosyl group of 5-phosphorylribose-1-pyrophosphate (PRPP) to anthranilate to yield N-(5'-phosphoribosyl)-anthranilate (PRA). The protein is Anthranilate phosphoribosyltransferase of Vesicomyosocius okutanii subsp. Calyptogena okutanii (strain HA).